The chain runs to 142 residues: MKVYFCGSIRGGRDDAELYHRMVAKLQSFATVLTEHVGRRELGDTGEHVTQGDRFIHDRDVDWLRQSDVVVAEVTQPSLGVGYELGRAVDMKKKVLCLFRPSSGRRLSAMIRGADNGDSFVVRDYCQDEIEQVLEDFFSNQK.

8 residues coordinate 5-hydroxymethyl-dUMP: Gly-7, Ile-9, Arg-10, Gly-11, Ser-78, Gly-80, Glu-84, and Ser-108.

This sequence belongs to the 2'-deoxynucleoside 5'-phosphate N-hydrolase 1 family. In terms of assembly, monomer and homodimer.

It is found in the cytoplasm. The protein resides in the nucleus. It catalyses the reaction 5-hydroxymethyl-dUMP + H2O = 5-hydroxymethyluracil + 2-deoxy-D-ribose 5-phosphate. Part of a nucleotide salvage pathway that eliminates epigenetically modified 5-hydroxymethyl-dCMP (hmdCMP) in a two-step process entailing deamination to cytotoxic 5-hydroxymethyl-dUMP (hmdUMP), followed by its hydrolysis into 5-hydroxymethyluracil (hmU) and 2-deoxy-D-ribose 5-phosphate (deoxyribosephosphate). Catalyzes the second step in that pathway, the hydrolysis of the N-glycosidic bond in hmdUMP, degrading this cytotoxic nucleotide to avoid its genomic integration. This Tetraodon nigroviridis (Spotted green pufferfish) protein is 5-hydroxymethyl-dUMP N-hydrolase (dnph1).